We begin with the raw amino-acid sequence, 88 residues long: Small ribosomal subunit protein bS20 (88 aa).

Belongs to the bacterial ribosomal protein bS20 family.

Its function is as follows. Binds directly to 16S ribosomal RNA. In Natranaerobius thermophilus (strain ATCC BAA-1301 / DSM 18059 / JW/NM-WN-LF), this protein is Small ribosomal subunit protein bS20.